A 90-amino-acid chain; its full sequence is DNA-binding protein HU-beta (90 aa).

Belongs to the bacterial histone-like protein family. As to quaternary structure, heterodimer of an alpha and a beta chain.

Its function is as follows. Histone-like DNA-binding protein which is capable of wrapping DNA to stabilize it, and thus to prevent its denaturation under extreme environmental conditions. The polypeptide is DNA-binding protein HU-beta (hupB) (Pseudomonas fluorescens (strain ATCC BAA-477 / NRRL B-23932 / Pf-5)).